The chain runs to 503 residues: Cytochrome P450 11B1, mitochondrial (503 aa).

A mitochondrion-targeting transit peptide spans 1–24; that stretch reads MAIWAKAEAWLAGPWLALNRARTL. Cys450 contributes to the heme binding site.

It belongs to the cytochrome P450 family. Heme serves as cofactor.

It localises to the mitochondrion inner membrane. The enzyme catalyses a steroid + 2 reduced [adrenodoxin] + O2 + 2 H(+) = an 11beta-hydroxysteroid + 2 oxidized [adrenodoxin] + H2O. The catalysed reaction is 11-deoxycortisol + 2 reduced [adrenodoxin] + O2 + 2 H(+) = cortisol + 2 oxidized [adrenodoxin] + H2O. It catalyses the reaction 21-hydroxyprogesterone + 2 reduced [adrenodoxin] + O2 + 2 H(+) = corticosterone + 2 oxidized [adrenodoxin] + H2O. It carries out the reaction corticosterone + 2 reduced [adrenodoxin] + O2 + 2 H(+) = 18-hydroxycorticosterone + 2 oxidized [adrenodoxin] + H2O. The enzyme catalyses 18-hydroxycorticosterone + 2 reduced [adrenodoxin] + O2 + 2 H(+) = aldosterone + 2 oxidized [adrenodoxin] + 2 H2O. The catalysed reaction is 21-hydroxyprogesterone + 2 reduced [adrenodoxin] + O2 + 2 H(+) = 19-hydroxy-11-deoxycorticosterone + 2 oxidized [adrenodoxin] + H2O. It catalyses the reaction 19-hydroxy-11-deoxycorticosterone + 2 reduced [adrenodoxin] + O2 + 2 H(+) = 19-oxo-11-deoxycorticosterone + 2 oxidized [adrenodoxin] + 2 H2O. It participates in steroid biosynthesis; glucocorticoid biosynthesis. It functions in the pathway steroid hormone biosynthesis. A cytochrome P450 monooxygenase that catalyzes the biosynthesis of aldosterone and other adrenal corticoids. Differing from other species (such as human, rat and mice), it is able to catalyze three sequential oxidative reactions of 11-deoxycorticosterone (21-hydroxyprogesterone), namely 11-beta hydroxylation, followed by two successive oxidations at C18 yielding 18-hydroxy and then 18-oxo intermediates, and ending with the formation of aldosterone. Steroid 11beta, 18- and 19-hydroxylase. Mechanistically, uses molecular oxygen inserting one oxygen atom into a substrate and reducing the second into a water molecule. Two electrons are provided by NADPH via a two-protein mitochondrial transfer system comprising flavoprotein FDXR (adrenodoxin/ferredoxin reductase) and nonheme iron-sulfur protein FDX1 or FDX2 (adrenodoxin/ferredoxin). The chain is Cytochrome P450 11B1, mitochondrial (CYP11B1) from Sus scrofa (Pig).